The following is a 568-amino-acid chain: Phosphoprotein (568 aa).

A disordered region spans residues 1–25; that stretch reads MDQDAFFSERDPEAEGETPRKQESL. A compositionally biased stretch (basic and acidic residues) spans 7-24; that stretch reads FSERDPEAEGETPRKQES. The tract at residues 33–41 is N0 binding; sequence DVVLSYKPT. The disordered stretch occupies residues 55-322; the sequence is DNSKENKPSC…TTANEEGTSN (268 aa). 4 stretches are compositionally biased toward basic and acidic residues: residues 56-105, 132-144, 151-167, and 175-190; these read NSKE…HARI, RNTRIDEDSPNER, PTDEDRKMAENSNKREE, and EEVRRGTPLSDDREGR. Over residues 191-216 the composition is skewed to polar residues; that stretch reads TNNNGRSMETSSTHSTRITDVITNPS. Positions 239–265 are enriched in basic and acidic residues; that stretch reads TRSERTQNSELHKSTSEDSSNLEDHNT. Over residues 294–304 the composition is skewed to low complexity; sequence YTTNNANNNTK. Residues 344–411 form a multimerization region; sequence FELSRSASHV…SSRDLHKRFS (68 aa). The stretch at 387–416 forms a coiled coil; that stretch reads EENRTLLKQIQEEIDSSRDLHKRFSEYQKE. The segment at 412–445 is l protein binding; the sequence is EYQKEQNSLMMANLSTLHIITDRGGKTGDPSDTT. 2 disordered regions span residues 434–455 and 494–513; these read RGGKTGDPSDTTRSPSVFTKGK and VLEEHNNEPQASNASRLIPS. Residues 441–450 are compositionally biased toward polar residues; the sequence is PSDTTRSPSV. The interval 479 to 568 is interaction with the nucleocapsid (N-RNA); the sequence is DLIREDELRD…FEEDIDSLTN (90 aa).

Belongs to the respirovirus P protein family. Homotetramer. Interacts (via multimerization domain) with polymerase L; this interaction forms the polymerase complex. Interacts (via N-terminus) with N0; this interaction allows P to chaperon N0 before encapsidation and form the N-P complex. Interacts (via C-terminus) with N-RNA template; this interaction positions the polymerase on the template.

Functionally, essential cofactor of the RNA polymerase L that plays a central role in the transcription and replication by forming the polymerase complex with RNA polymerase L and recruiting L to the genomic N-RNA template for RNA synthesis. Also plays a central role in the encapsidation of nascent RNA chains by forming the encapsidation complex with the nucleocapsid protein N (N-P complex). Acts as a chaperone for newly synthesized free N protein, so-called N0, allowing encapsidation of nascent RNA chains during replication. The nucleoprotein protein N prevents excessive phosphorylation of P, which leads to down-regulation of viral transcription/ replication. Participates, together with N, in the formation of viral factories (viroplasms), which are large inclusions in the host cytoplasm where replication takes place. Recruits host PI4KB and remodel the host endoplasmic reticulum membrane to form viral replication factories. This Human parainfluenza 1 virus (strain CI-5/73) (HPIV-1) protein is Phosphoprotein (P/C).